The primary structure comprises 236 residues: Probable glutathione S-transferase BZ2 (236 aa).

The GST N-terminal domain occupies 1–80; the sequence is MRVLGGEVSP…YIEDVARESG (80 aa). Glutathione-binding positions include Ser9, Lys37, Ile51, and 64–65; that span reads ES. Residues 92–221 enclose the GST C-terminal domain; that stretch reads DPYERAMHRF…LPDTEKVVQF (130 aa).

This sequence belongs to the GST superfamily. HSP26 family.

It catalyses the reaction RX + glutathione = an S-substituted glutathione + a halide anion + H(+). It participates in pigment biosynthesis; anthocyanin biosynthesis. The chain is Probable glutathione S-transferase BZ2 (BZ2) from Zea mays (Maize).